The primary structure comprises 471 residues: ATP synthase subunit beta (471 aa).

An ATP-binding site is contributed by 152–159 (GGAGVGKT).

The protein belongs to the ATPase alpha/beta chains family. In terms of assembly, F-type ATPases have 2 components, CF(1) - the catalytic core - and CF(0) - the membrane proton channel. CF(1) has five subunits: alpha(3), beta(3), gamma(1), delta(1), epsilon(1). CF(0) has three main subunits: a(1), b(2) and c(9-12). The alpha and beta chains form an alternating ring which encloses part of the gamma chain. CF(1) is attached to CF(0) by a central stalk formed by the gamma and epsilon chains, while a peripheral stalk is formed by the delta and b chains.

It is found in the cell membrane. The catalysed reaction is ATP + H2O + 4 H(+)(in) = ADP + phosphate + 5 H(+)(out). Produces ATP from ADP in the presence of a proton gradient across the membrane. The catalytic sites are hosted primarily by the beta subunits. This is ATP synthase subunit beta from Herpetosiphon aurantiacus (Herpetosiphon giganteus).